The sequence spans 151 residues: Methylglyoxal synthase (151 aa).

In terms of domain architecture, MGS-like spans 6–151 (RTMPAHKHVA…DYEAYLAERM (146 aa)). Residues His-19, Lys-23, 45–48 (TGTT), and 65–66 (SG) contribute to the substrate site. Catalysis depends on Asp-71, which acts as the Proton donor/acceptor. Residue His-98 participates in substrate binding.

The protein belongs to the methylglyoxal synthase family.

It carries out the reaction dihydroxyacetone phosphate = methylglyoxal + phosphate. Its function is as follows. Catalyzes the formation of methylglyoxal from dihydroxyacetone phosphate. The protein is Methylglyoxal synthase of Vibrio parahaemolyticus serotype O3:K6 (strain RIMD 2210633).